Reading from the N-terminus, the 403-residue chain is Ribosomal RNA large subunit methyltransferase I (403 aa).

One can recognise a PUA domain in the interval 9-88; that stretch reads YPRLVLSKGR…ESIDIAFFTR (80 aa).

Belongs to the methyltransferase superfamily. RlmI family.

It localises to the cytoplasm. It carries out the reaction cytidine(1962) in 23S rRNA + S-adenosyl-L-methionine = 5-methylcytidine(1962) in 23S rRNA + S-adenosyl-L-homocysteine + H(+). Its function is as follows. Specifically methylates the cytosine at position 1962 (m5C1962) of 23S rRNA. This chain is Ribosomal RNA large subunit methyltransferase I, found in Salmonella newport (strain SL254).